The sequence spans 463 residues: Glutamate--tRNA ligase (463 aa).

A 'HIGH' region motif is present at residues 10–20; sequence PSPTGHLHIGG. The 'KMSKS' region motif lies at 236 to 240; that stretch reads KLSKR. Lysine 239 contacts ATP.

It belongs to the class-I aminoacyl-tRNA synthetase family. Glutamate--tRNA ligase type 1 subfamily. As to quaternary structure, monomer.

It is found in the cytoplasm. It carries out the reaction tRNA(Glu) + L-glutamate + ATP = L-glutamyl-tRNA(Glu) + AMP + diphosphate. Its function is as follows. Catalyzes the attachment of glutamate to tRNA(Glu) in a two-step reaction: glutamate is first activated by ATP to form Glu-AMP and then transferred to the acceptor end of tRNA(Glu). This Nitratidesulfovibrio vulgaris (strain DP4) (Desulfovibrio vulgaris) protein is Glutamate--tRNA ligase.